Here is a 335-residue protein sequence, read N- to C-terminus: Glycerol-3-phosphate dehydrogenase [NAD(P)+] (335 aa).

The NADPH site is built by Phe-11, Arg-31, and Lys-107. Sn-glycerol 3-phosphate-binding residues include Lys-107 and Gly-135. Ala-139 provides a ligand contact to NADPH. Sn-glycerol 3-phosphate-binding residues include Lys-190, Asp-245, Ser-255, Arg-256, and Asn-257. Lys-190 serves as the catalytic Proton acceptor. Position 256 (Arg-256) interacts with NADPH. 2 residues coordinate NADPH: Leu-280 and Glu-282.

This sequence belongs to the NAD-dependent glycerol-3-phosphate dehydrogenase family.

The protein localises to the cytoplasm. The enzyme catalyses sn-glycerol 3-phosphate + NAD(+) = dihydroxyacetone phosphate + NADH + H(+). It catalyses the reaction sn-glycerol 3-phosphate + NADP(+) = dihydroxyacetone phosphate + NADPH + H(+). It participates in membrane lipid metabolism; glycerophospholipid metabolism. Functionally, catalyzes the reduction of the glycolytic intermediate dihydroxyacetone phosphate (DHAP) to sn-glycerol 3-phosphate (G3P), the key precursor for phospholipid synthesis. This chain is Glycerol-3-phosphate dehydrogenase [NAD(P)+], found in Anaplasma marginale (strain St. Maries).